The sequence spans 209 residues: Uracil phosphoribosyltransferase (209 aa).

Residues arginine 79, arginine 104, and aspartate 131 to serine 139 contribute to the 5-phospho-alpha-D-ribose 1-diphosphate site. Uracil contacts are provided by residues isoleucine 194 and glycine 199 to alanine 201. Aspartate 200 contacts 5-phospho-alpha-D-ribose 1-diphosphate.

This sequence belongs to the UPRTase family. The cofactor is Mg(2+).

It carries out the reaction UMP + diphosphate = 5-phospho-alpha-D-ribose 1-diphosphate + uracil. It participates in pyrimidine metabolism; UMP biosynthesis via salvage pathway; UMP from uracil: step 1/1. Its activity is regulated as follows. Allosterically activated by GTP. In terms of biological role, catalyzes the conversion of uracil and 5-phospho-alpha-D-ribose 1-diphosphate (PRPP) to UMP and diphosphate. This is Uracil phosphoribosyltransferase from Staphylococcus aureus (strain JH1).